The following is a 146-amino-acid chain: Protein beta (146 aa).

This Adelaide River virus (ARV) protein is Protein beta.